Consider the following 258-residue polypeptide: 6-phosphogluconolactonase (258 aa).

The protein belongs to the glucosamine/galactosamine-6-phosphate isomerase family. 6-phosphogluconolactonase subfamily.

The enzyme catalyses 6-phospho-D-glucono-1,5-lactone + H2O = 6-phospho-D-gluconate + H(+). Its pathway is carbohydrate degradation; pentose phosphate pathway; D-ribulose 5-phosphate from D-glucose 6-phosphate (oxidative stage): step 2/3. In terms of biological role, hydrolysis of 6-phosphogluconolactone to 6-phosphogluconate. This Chlamydia pneumoniae (Chlamydophila pneumoniae) protein is 6-phosphogluconolactonase (pgl).